Here is a 182-residue protein sequence, read N- to C-terminus: Small ribosomal subunit protein uS4c (182 aa).

Positions 82 to 143 (MRLDNILFRL…KERSKVLIQN (62 aa)) constitute an S4 RNA-binding domain.

The protein belongs to the universal ribosomal protein uS4 family. As to quaternary structure, part of the 30S ribosomal subunit. Contacts protein S5. The interaction surface between S4 and S5 is involved in control of translational fidelity.

The protein resides in the plastid. Its subcellular location is the chloroplast. Its function is as follows. One of the primary rRNA binding proteins, it binds directly to 16S rRNA where it nucleates assembly of the body of the 30S subunit. Functionally, with S5 and S12 plays an important role in translational accuracy. This Alophia veracruzana (Mexican pine woods lily) protein is Small ribosomal subunit protein uS4c (rps4).